We begin with the raw amino-acid sequence, 198 residues long: MQLQINIASHPLIQHWSGILKNDNNPGTILRTACSELGKWITYEIMREWLVTETIELKANTTISLISSHYKYIIVIIMPYGFILAEGARSLLPTANIVLVNYNDIINNVPDQLNSFTKILVLDLFLDEATITPLLNDFIKKGAVLSNIKIACLECGTSQLNQLGQIWSKLEIYTTKVNTNVDKEKCSREDDFKDKFFV.

The protein belongs to the UPRTase family.

Its subcellular location is the plastid. The protein resides in the chloroplast. The polypeptide is Uracil phosphoribosyltransferase homolog (Pyropia yezoensis (Susabi-nori)).